We begin with the raw amino-acid sequence, 720 residues long: Long chain acyl-CoA synthetase 8 (720 aa).

Met1 is modified (N-acetylmethionine). 279–290 (IMFTSGSTGLPK) is an ATP binding site. The interval 554–582 (DEKGTRWFYTGDIGRFHPDGCLEVIDRKK) is fatty acid-binding.

The protein belongs to the ATP-dependent AMP-binding enzyme family. It depends on Mg(2+) as a cofactor.

The catalysed reaction is a long-chain fatty acid + ATP + CoA = a long-chain fatty acyl-CoA + AMP + diphosphate. It functions in the pathway lipid metabolism; fatty acid metabolism. Functionally, activation of long-chain fatty acids for both synthesis of cellular lipids, and degradation via beta-oxidation. Preferentially uses palmitate, palmitoleate, oleate and linoleate. This Arabidopsis thaliana (Mouse-ear cress) protein is Long chain acyl-CoA synthetase 8 (LACS8).